The chain runs to 331 residues: Pyrimidine monooxygenase RutA (331 aa).

FMN contacts are provided by residues 79–80, Asn145, Glu154, 170–171, and Ser220; these read IK and RY. A disordered region spans residues 300-331; it reads WLTEQSQKDTRSGTDTNVRQMADPTSASAFNH. Residues 312–331 show a composition bias toward polar residues; the sequence is GTDTNVRQMADPTSASAFNH.

It belongs to the NtaA/SnaA/DszA monooxygenase family. RutA subfamily.

It catalyses the reaction uracil + FMNH2 + NADH + O2 = (Z)-3-ureidoacrylate + FMN + NAD(+) + H2O + H(+). The catalysed reaction is thymine + FMNH2 + NADH + O2 = (Z)-2-methylureidoacrylate + FMN + NAD(+) + H2O + H(+). Its function is as follows. Catalyzes the pyrimidine ring opening between N-3 and C-4 by an unusual flavin hydroperoxide-catalyzed mechanism, adding oxygen atoms in the process to yield ureidoacrylate peracid, that immediately reacts with FMN forming ureidoacrylate and FMN-N(5)-oxide. The FMN-N(5)-oxide reacts spontaneously with NADH to produce FMN. Requires the flavin reductase RutF to regenerate FMN in vivo. The protein is Pyrimidine monooxygenase RutA of Escherichia coli O7:K1 (strain IAI39 / ExPEC).